A 494-amino-acid chain; its full sequence is NAD(P)H-quinone oxidoreductase subunit 2 B, chloroplastic (494 aa).

A run of 14 helical transmembrane segments spans residues 13-33 (SILP…IDLI), 39-59 (TPWL…ILLF), 81-101 (IFRL…IDYI), 107-127 (ALTE…FLCC), 131-151 (LVTI…LSGY), 166-186 (LLMG…LYGL), 211-231 (MFIS…LVPF), 243-263 (PTPV…ALAT), 277-297 (WHLL…FIAV), 305-325 (MLAY…IAAE), 336-356 (YMLI…LFGL), 378-398 (LSLV…GFFG), 411-433 (LYFL…LKII), and 468-488 (MIIC…IIAI).

The protein belongs to the complex I subunit 2 family. NDH is composed of at least 16 different subunits, 5 of which are encoded in the nucleus.

Its subcellular location is the plastid. The protein resides in the chloroplast thylakoid membrane. It catalyses the reaction a plastoquinone + NADH + (n+1) H(+)(in) = a plastoquinol + NAD(+) + n H(+)(out). It carries out the reaction a plastoquinone + NADPH + (n+1) H(+)(in) = a plastoquinol + NADP(+) + n H(+)(out). Functionally, NDH shuttles electrons from NAD(P)H:plastoquinone, via FMN and iron-sulfur (Fe-S) centers, to quinones in the photosynthetic chain and possibly in a chloroplast respiratory chain. The immediate electron acceptor for the enzyme in this species is believed to be plastoquinone. Couples the redox reaction to proton translocation, and thus conserves the redox energy in a proton gradient. This Angiopteris evecta (Mule's foot fern) protein is NAD(P)H-quinone oxidoreductase subunit 2 B, chloroplastic.